The primary structure comprises 363 residues: UDP-3-O-acylglucosamine N-acyltransferase (363 aa).

The active-site Proton acceptor is histidine 266.

The protein belongs to the transferase hexapeptide repeat family. LpxD subfamily. In terms of assembly, homotrimer.

The catalysed reaction is a UDP-3-O-[(3R)-3-hydroxyacyl]-alpha-D-glucosamine + a (3R)-hydroxyacyl-[ACP] = a UDP-2-N,3-O-bis[(3R)-3-hydroxyacyl]-alpha-D-glucosamine + holo-[ACP] + H(+). It participates in bacterial outer membrane biogenesis; LPS lipid A biosynthesis. In terms of biological role, catalyzes the N-acylation of UDP-3-O-acylglucosamine using 3-hydroxyacyl-ACP as the acyl donor. Is involved in the biosynthesis of lipid A, a phosphorylated glycolipid that anchors the lipopolysaccharide to the outer membrane of the cell. This Bordetella parapertussis (strain 12822 / ATCC BAA-587 / NCTC 13253) protein is UDP-3-O-acylglucosamine N-acyltransferase.